The following is a 56-amino-acid chain: MAKDKTTLPPTGAGLMRFFDEDTRAIKVSPKGVIAIVLVLIAFEVFLHLFGPSIFG.

The Cytoplasmic segment spans residues 1 to 29 (MAKDKTTLPPTGAGLMRFFDEDTRAIKVS). A helical membrane pass occupies residues 30-51 (PKGVIAIVLVLIAFEVFLHLFG). The Extracellular segment spans residues 52–56 (PSIFG).

This sequence belongs to the SEC61-beta family. In terms of assembly, component of the protein translocase complex. Heterotrimer consisting of alpha (SecY), beta (SecG) and gamma (SecE) subunits. Can form oligomers of the heterotrimer.

Its subcellular location is the cell membrane. Its function is as follows. Involved in protein export. The function of the beta subunit is unknown, but it may be involved in stabilization of the trimeric complex. The polypeptide is Preprotein translocase subunit SecG (Thermococcus gammatolerans (strain DSM 15229 / JCM 11827 / EJ3)).